A 299-amino-acid chain; its full sequence is MAALTQKKTCSQMMEEWKEFMWNPRTREFMGRTGSSWALILLFYVVFYAFLTAVFSLSLWVMLQTIDEYTPKYADRLANPGLMIRPKMDTTEVVYSTNGMNGTWQAYVDNLNSLLKDYNKTVQMERGVNCTPGVYNMQEDTGDVRNNPKKACWFFRDVLGDCSGVSDTTYGYQDGKPCVLIKMNRVINFLPVPIKELSNTSITIKCTAQNNDDLLGSIQYFPSVNNQSLGAIDLMYFPYYGNRAQQNYTQPFVAVKFLNATKGVDHMVECRVNAANINNQDPRDLYQGRVIFTMKIDRL.

At 1-36 (MAALTQKKTCSQMMEEWKEFMWNPRTREFMGRTGSS) the chain is on the cytoplasmic side. A helical; Signal-anchor for type II membrane protein transmembrane segment spans residues 37–57 (WALILLFYVVFYAFLTAVFSL). The Extracellular portion of the chain corresponds to 58 to 299 (SLWVMLQTID…VIFTMKIDRL (242 aa)). Residues Asn-101 and Asn-119 are each glycosylated (N-linked (GlcNAc...) asparagine). 2 cysteine pairs are disulfide-bonded: Cys-130-Cys-152 and Cys-162-Cys-178. 4 N-linked (GlcNAc...) asparagine glycosylation sites follow: Asn-199, Asn-226, Asn-247, and Asn-259. Cys-206 and Cys-270 are oxidised to a cystine.

This sequence belongs to the X(+)/potassium ATPases subunit beta family. The sodium/potassium-transporting ATPase is composed of a catalytic alpha subunit, an auxiliary non-catalytic beta subunit and an additional regulatory subunit. Expressed at a high level in bladder epithelial cells and eye and at a trace level in kidney; it is not detectable in significant amounts in the stomach, colon and small intestine.

It localises to the cell membrane. In terms of biological role, this is the non-catalytic component of the active enzyme, which catalyzes the hydrolysis of ATP coupled with the exchange of Na(+) and K(+) ions across the plasma membrane. The exact function of this glycoprotein is not known. Some specific sequence of the beta subunit can modulate the activation of the Na,K-pump by extracellular potassium ions. This Rhinella marina (Cane toad) protein is Sodium/potassium-transporting ATPase subunit beta-2.